The sequence spans 154 residues: uncharacterized protein (154 aa).

An N-terminal signal peptide occupies residues 1-21; that stretch reads MSISSGSFAQPAAVVSSPGVT.

It belongs to the ivy family.

Its subcellular location is the periplasm. This is an uncharacterized protein from Yersinia pestis.